The primary structure comprises 209 residues: Ribosomal RNA large subunit methyltransferase E (209 aa).

Residues Gly-63, Trp-65, Asp-83, Asp-99, and Asp-124 each contribute to the S-adenosyl-L-methionine site. Lys-164 serves as the catalytic Proton acceptor.

The protein belongs to the class I-like SAM-binding methyltransferase superfamily. RNA methyltransferase RlmE family.

It localises to the cytoplasm. It catalyses the reaction uridine(2552) in 23S rRNA + S-adenosyl-L-methionine = 2'-O-methyluridine(2552) in 23S rRNA + S-adenosyl-L-homocysteine + H(+). Functionally, specifically methylates the uridine in position 2552 of 23S rRNA at the 2'-O position of the ribose in the fully assembled 50S ribosomal subunit. The protein is Ribosomal RNA large subunit methyltransferase E of Shewanella loihica (strain ATCC BAA-1088 / PV-4).